A 120-amino-acid chain; its full sequence is Large ribosomal subunit protein bL17 (120 aa).

Belongs to the bacterial ribosomal protein bL17 family. Part of the 50S ribosomal subunit. Contacts protein L32.

The polypeptide is Large ribosomal subunit protein bL17 (Mycoplasmopsis pulmonis (strain UAB CTIP) (Mycoplasma pulmonis)).